Consider the following 361-residue polypeptide: Phospho-N-acetylmuramoyl-pentapeptide-transferase (361 aa).

Helical transmembrane passes span L28–L48, T73–L93, Y97–Y117, F134–L154, V168–T188, G200–A220, A237–F257, V264–I284, I289–V309, and Q338–L358.

This sequence belongs to the glycosyltransferase 4 family. MraY subfamily. Requires Mg(2+) as cofactor.

The protein localises to the cell inner membrane. It carries out the reaction UDP-N-acetyl-alpha-D-muramoyl-L-alanyl-gamma-D-glutamyl-meso-2,6-diaminopimeloyl-D-alanyl-D-alanine + di-trans,octa-cis-undecaprenyl phosphate = di-trans,octa-cis-undecaprenyl diphospho-N-acetyl-alpha-D-muramoyl-L-alanyl-D-glutamyl-meso-2,6-diaminopimeloyl-D-alanyl-D-alanine + UMP. The protein operates within cell wall biogenesis; peptidoglycan biosynthesis. Its function is as follows. Catalyzes the initial step of the lipid cycle reactions in the biosynthesis of the cell wall peptidoglycan: transfers peptidoglycan precursor phospho-MurNAc-pentapeptide from UDP-MurNAc-pentapeptide onto the lipid carrier undecaprenyl phosphate, yielding undecaprenyl-pyrophosphoryl-MurNAc-pentapeptide, known as lipid I. The protein is Phospho-N-acetylmuramoyl-pentapeptide-transferase of Nitrosomonas europaea (strain ATCC 19718 / CIP 103999 / KCTC 2705 / NBRC 14298).